The chain runs to 167 residues: 2-amino-4-hydroxy-6-hydroxymethyldihydropteridine pyrophosphokinase (167 aa).

This sequence belongs to the HPPK family.

It carries out the reaction 6-hydroxymethyl-7,8-dihydropterin + ATP = (7,8-dihydropterin-6-yl)methyl diphosphate + AMP + H(+). The protein operates within cofactor biosynthesis; tetrahydrofolate biosynthesis; 2-amino-4-hydroxy-6-hydroxymethyl-7,8-dihydropteridine diphosphate from 7,8-dihydroneopterin triphosphate: step 4/4. In terms of biological role, catalyzes the transfer of pyrophosphate from adenosine triphosphate (ATP) to 6-hydroxymethyl-7,8-dihydropterin, an enzymatic step in folate biosynthesis pathway. This chain is 2-amino-4-hydroxy-6-hydroxymethyldihydropteridine pyrophosphokinase (folK), found in Bacillus subtilis (strain 168).